The chain runs to 374 residues: S-adenosylmethionine:tRNA ribosyltransferase-isomerase (374 aa).

Belongs to the QueA family. As to quaternary structure, monomer.

Its subcellular location is the cytoplasm. The enzyme catalyses 7-aminomethyl-7-carbaguanosine(34) in tRNA + S-adenosyl-L-methionine = epoxyqueuosine(34) in tRNA + adenine + L-methionine + 2 H(+). It functions in the pathway tRNA modification; tRNA-queuosine biosynthesis. Transfers and isomerizes the ribose moiety from AdoMet to the 7-aminomethyl group of 7-deazaguanine (preQ1-tRNA) to give epoxyqueuosine (oQ-tRNA). The chain is S-adenosylmethionine:tRNA ribosyltransferase-isomerase from Prochlorococcus marinus (strain AS9601).